A 448-amino-acid polypeptide reads, in one-letter code: MQVIASFCSKPNENEFVGRRQLLSSVCSKISQGDVVSHPPVSSVKVTQDWKSNLHELAVKSVPSTTRRILLTSLFMNLCFNPSRYLSALALGDPSVATVEDVSPTVFPAGPLFPTEGRIVQLFEKNTYSVVNIFDVTLRPQLKMTGVVEIPEGNGSGVVWDGQGYIVTNYHVIGNALSRNPSPGDVVGRVNILASDGVQKNFEGKLVGADRAKDLAVLKVDAPETLLKPIKVGQSNSLKVGQQCLAIGNPFGFDHTLTVGVISGLNRDIFSQTGVTIGGGIQTDAAINPGNSGGPLLDSKGNLIGINTAIFTQTGTSAGVGFAIPSSTVLKIVPQLIQFSKVLRAGINIELAPDPVANQLNVRNGALVLQVPGKSLAEKAGLHPTSRGFAGNIVLGDIIVAVDDKPVKNKAELMKILDEYSVGDKVTLKIKRGNEDLELKISLEEKSS.

Residues 152 to 333 (EGNGSGVVWD…IPSSTVLKIV (182 aa)) are serine protease. Catalysis depends on charge relay system residues His171, Asp214, and Ser292. The PDZ domain maps to 336–433 (LIQFSKVLRA…DKVTLKIKRG (98 aa)).

It belongs to the peptidase S1C family.

It is found in the plastid. The protein resides in the chloroplast thylakoid lumen. In terms of biological role, probable serine protease. The polypeptide is Protease Do-like 8, chloroplastic (DEGP8) (Arabidopsis thaliana (Mouse-ear cress)).